The following is a 198-amino-acid chain: Probable GTP-binding protein EngB (198 aa).

Residues 21–195 (NIPEVCFVGR…YDALIRLLEV (175 aa)) enclose the EngB-type G domain. GTP-binding positions include 29 to 36 (GRSNVGKS), 56 to 60 (GKTRL), 75 to 78 (DAPG), 142 to 145 (TKLD), and 174 to 176 (VSN). Positions 36 and 58 each coordinate Mg(2+).

This sequence belongs to the TRAFAC class TrmE-Era-EngA-EngB-Septin-like GTPase superfamily. EngB GTPase family. Requires Mg(2+) as cofactor.

Its function is as follows. Necessary for normal cell division and for the maintenance of normal septation. The polypeptide is Probable GTP-binding protein EngB (Mesoplasma florum (strain ATCC 33453 / NBRC 100688 / NCTC 11704 / L1) (Acholeplasma florum)).